Reading from the N-terminus, the 228-residue chain is Serum amyloid P-component (228 aa).

Residues 1 to 20 (MDKLLLWMSVFTSLLSEAFA) form the signal peptide. The region spanning 25–224 (NQKVFVFPRE…YVVIKPRMWD (200 aa)) is the Pentraxin (PTX) domain. Asn-52 carries N-linked (GlcNAc...) asparagine glycosylation. Cys-56 and Cys-115 are disulfide-bonded. The Ca(2+) site is built by Asp-78, Asn-79, Glu-156, Gln-157, Asp-158, and Gln-168.

This sequence belongs to the pentraxin family. In terms of assembly, homopentamer. Pentraxin (or pentaxin) have a discoid arrangement of 5 non-covalently bound subunits. Requires Ca(2+) as cofactor.

It localises to the secreted. This is Serum amyloid P-component (Apcs) from Rattus norvegicus (Rat).